The sequence spans 492 residues: Peptidyl-prolyl cis-trans isomerase-like 4 (492 aa).

Residues 1-161 enclose the PPIase cyclophilin-type domain; that stretch reads MAVLLETTLG…QDIRINHTVI (161 aa). Positions 167–188 are disordered; it reads DDPPDLLIPDRSPEPTREQLDS. A compositionally biased stretch (basic and acidic residues) spans 177–187; that stretch reads RSPEPTREQLD. Phosphoserine is present on Ser178. Thr182 bears the Phosphothreonine mark. Glycyl lysine isopeptide (Lys-Gly) (interchain with G-Cter in SUMO2) cross-links involve residues Lys201, Lys212, and Lys218. The 79-residue stretch at 240 to 318 folds into the RRM domain; it reads NVLFVCKLNP…RRIHVDFSQS (79 aa). Glycyl lysine isopeptide (Lys-Gly) (interchain with G-Cter in SUMO2) cross-links involve residues Lys321 and Lys362. Disordered regions lie at residues 368–406 and 423–492; these read DEQA…PIKN and EESC…SKYR. Residues 377–390 show a composition bias toward basic residues; sequence SHSHTSKKHKKKTH. Phosphoserine is present on Ser393. A Glycyl lysine isopeptide (Lys-Gly) (interchain with G-Cter in SUMO2) cross-link involves residue Lys405. Positions 426–452 are enriched in basic and acidic residues; that stretch reads CWEKQKSEKRDRTQNRSRSRSRERDGH. A Glycyl lysine isopeptide (Lys-Gly) (interchain with G-Cter in SUMO2) cross-link involves residue Lys460. Ser471 is modified (phosphoserine). Basic and acidic residues predominate over residues 482–492; the sequence is KSKDKEKSKYR.

The protein belongs to the cyclophilin-type PPIase family. PPIL4 subfamily. As to expression, abundantly expressed in kidney but has a ubiquitously low expression pattern in other adult tissues.

The protein resides in the nucleus. The enzyme catalyses [protein]-peptidylproline (omega=180) = [protein]-peptidylproline (omega=0). Its function is as follows. PPIases accelerate the folding of proteins. It catalyzes the cis-trans isomerization of proline imidic peptide bonds in oligopeptides. This Homo sapiens (Human) protein is Peptidyl-prolyl cis-trans isomerase-like 4 (PPIL4).